A 196-amino-acid chain; its full sequence is Peptidyl-tRNA hydrolase (196 aa).

Y18 is a tRNA binding site. H23 acts as the Proton acceptor in catalysis. Residues F69, N71, and N117 each coordinate tRNA.

This sequence belongs to the PTH family. As to quaternary structure, monomer.

The protein resides in the cytoplasm. The enzyme catalyses an N-acyl-L-alpha-aminoacyl-tRNA + H2O = an N-acyl-L-amino acid + a tRNA + H(+). Its function is as follows. Hydrolyzes ribosome-free peptidyl-tRNAs (with 1 or more amino acids incorporated), which drop off the ribosome during protein synthesis, or as a result of ribosome stalling. Catalyzes the release of premature peptidyl moieties from peptidyl-tRNA molecules trapped in stalled 50S ribosomal subunits, and thus maintains levels of free tRNAs and 50S ribosomes. The chain is Peptidyl-tRNA hydrolase from Vibrio campbellii (strain ATCC BAA-1116).